Reading from the N-terminus, the 381-residue chain is GDP-mannose-dependent monoacylated alpha-(1-6)-phosphatidylinositol monomannoside mannosyltransferase (381 aa).

Residues R206, K211, L261, and E298 each contribute to the GDP-alpha-D-mannose site.

The protein belongs to the glycosyltransferase group 1 family. Glycosyltransferase 4 subfamily.

It carries out the reaction a 1,2-diacyl-sn-glycero-3-phospho-[alpha-D-mannopyranosyl-(1&lt;-&gt;6)-D-myo-inositol] + GDP-alpha-D-mannose = a 2,6-O-bis(alpha-D-mannopyranosyl)-1-phosphatidyl-1D-myo-inositol + GDP + H(+). The catalysed reaction is a 1,2-diacyl-sn-glycero-3-phospho-[alpha-D-6-acyl-mannopyranosyl-(1&lt;-&gt;6)-D-myo-inositol] + GDP-alpha-D-mannose = a 2-O-(alpha-D-mannosyl)-6-O-(6-O-acyl-alpha-D-mannosyl)-1-phosphatidyl-1D-myo-inositol + GDP + H(+). It participates in phospholipid metabolism; phosphatidylinositol metabolism. Functionally, involved in the biosynthesis of phosphatidyl-myo-inositol mannosides (PIM) which are early precursors in the biosynthesis of lipomannans (LM) and lipoarabinomannans (LAM). Catalyzes the addition of a mannosyl residue from GDP-D-mannose (GDP-Man) to the position 6 of a phosphatidyl-myo-inositol bearing an alpha-1,2-linked mannose residue (PIM1) to generate phosphatidyl-myo-inositol bearing alpha-1,2- and alpha-1,6-linked mannose residues (Ac1PIM2). PimB also catalyzes the addition of a mannosyl residue from GDP-Man to the position 6 of phosphatidyl-myo-inositol bearing an acylated alpha-1,2-linked mannose residue (Ac1PIM1) to generate monoacylated phosphatidyl-myo-inositol bearing alpha-1,2- and alpha-1,6-linked mannose residues (Ac1PIM2). The addition of the second mannosyl residue by PimB preferentially occurs before the acylation of the mannosyl residue transferred by PimA. Also able to transfer a mannosyl residue from GDP-Man to the position 6 of a phosphatidyl-myo-inositol (PI), but this reaction is very slow. The polypeptide is GDP-mannose-dependent monoacylated alpha-(1-6)-phosphatidylinositol monomannoside mannosyltransferase (Corynebacterium glutamicum (strain ATCC 13032 / DSM 20300 / JCM 1318 / BCRC 11384 / CCUG 27702 / LMG 3730 / NBRC 12168 / NCIMB 10025 / NRRL B-2784 / 534)).